The following is a 113-amino-acid chain: Small ribosomal subunit protein bS6 (113 aa).

The protein belongs to the bacterial ribosomal protein bS6 family.

Binds together with bS18 to 16S ribosomal RNA. This chain is Small ribosomal subunit protein bS6, found in Flavobacterium johnsoniae (strain ATCC 17061 / DSM 2064 / JCM 8514 / BCRC 14874 / CCUG 350202 / NBRC 14942 / NCIMB 11054 / UW101) (Cytophaga johnsonae).